A 282-amino-acid polypeptide reads, in one-letter code: MRWLFWTSENDKDECKCNNKPSSNSDEKPSIILNSSKDWNALSNATNWSHFLEPSNLIPTVLLTSGILFAVRIHRRYLRRIPEATNISPSYLRQRSILGKVTSVGDGDNFRIYHTPGGMLAGWGWLRKVPTSKKELKNNTIHIRIAGVDAPELAHFGRPSQPFGEEAHTWLTNRLIGRRIRAYVYRPDQYSRVVATVYAYRFLFFPQDIGLQMLREGLATIYEAKSGAEFGGPKQEKKYRDAEALAKKKGKGLWKAKASSDWESPRDFKSRMNAIDQGKGST.

A helical transmembrane segment spans residues 55 to 71; the sequence is SNLIPTVLLTSGILFAV. Residues 95–256 form the TNase-like domain; the sequence is RSILGKVTSV…KKKGKGLWKA (162 aa). The active site involves Arg144. Residue Asp149 participates in Ca(2+) binding. Residues Glu152 and Arg192 contribute to the active site.

It belongs to the LCL3 family.

It is found in the mitochondrion. The protein localises to the membrane. The chain is Probable endonuclease LCL3 (LCL3) from Arthroderma otae (strain ATCC MYA-4605 / CBS 113480) (Microsporum canis).